Here is a 286-residue protein sequence, read N- to C-terminus: Ribosomal RNA small subunit methyltransferase I (286 aa).

Belongs to the methyltransferase superfamily. RsmI family.

Its subcellular location is the cytoplasm. It catalyses the reaction cytidine(1402) in 16S rRNA + S-adenosyl-L-methionine = 2'-O-methylcytidine(1402) in 16S rRNA + S-adenosyl-L-homocysteine + H(+). In terms of biological role, catalyzes the 2'-O-methylation of the ribose of cytidine 1402 (C1402) in 16S rRNA. The chain is Ribosomal RNA small subunit methyltransferase I from Escherichia coli O157:H7.